The primary structure comprises 438 residues: Adenosylhomocysteinase (438 aa).

Substrate is bound by residues T61, D137, and E162. NAD(+) is bound at residue 163–165; it reads TTT. Residues K192 and D196 each coordinate substrate. NAD(+)-binding positions include N197, 226 to 231, E249, N284, 305 to 307, and N352; these read GYGDVG and IGH.

This sequence belongs to the adenosylhomocysteinase family. NAD(+) serves as cofactor.

It localises to the cytoplasm. It carries out the reaction S-adenosyl-L-homocysteine + H2O = L-homocysteine + adenosine. Its pathway is amino-acid biosynthesis; L-homocysteine biosynthesis; L-homocysteine from S-adenosyl-L-homocysteine: step 1/1. May play a key role in the regulation of the intracellular concentration of adenosylhomocysteine. The sequence is that of Adenosylhomocysteinase from Flavobacterium johnsoniae (strain ATCC 17061 / DSM 2064 / JCM 8514 / BCRC 14874 / CCUG 350202 / NBRC 14942 / NCIMB 11054 / UW101) (Cytophaga johnsonae).